A 123-amino-acid polypeptide reads, in one-letter code: Dormancy-associated protein homolog 4 (123 aa).

Positions 7–86 (LWDETVAGPT…NPGTPLTPGT (80 aa)) are disordered. The span at 30 to 46 (LSTVRSSPPSLSSDQVT) shows a compositional bias: low complexity. Polar residues-rich tracts occupy residues 47–58 (RSIMVTKGNNNV) and 71–80 (PTCSSSNPGT). The residue at position 74 (serine 74) is a Phosphoserine.

It belongs to the DRM1/ARP family.

The sequence is that of Dormancy-associated protein homolog 4 from Arabidopsis thaliana (Mouse-ear cress).